Reading from the N-terminus, the 1432-residue chain is uncharacterized protein (1432 aa).

9 disordered regions span residues 1–72 (MDTI…NYYN), 208–237 (NKIENNNNNNNNKINNENNNEKNKNNNNGQ), 280–335 (ERNE…ENNL), 531–607 (IVKS…NNSS), 690–712 (QNKSPLISPSLSKSNTTTTTTTT), 738–801 (NNTL…NGGR), 896–950 (QSNN…SPPT), 1044–1076 (NINSNSNNNNNNNNNNNNNNNNNNNNYNNNNNN), and 1303–1359 (NNNN…NTTP). Composition is skewed to low complexity over residues 14–72 (INNN…NYYN), 208–225 (NKIENNNNNNNNKINNEN), and 284–300 (LTSPASSLPSLPSLPSS). Over residues 315 to 325 (QEEEEEEEEED) the composition is skewed to acidic residues. Composition is skewed to low complexity over residues 536–575 (SSSNLNKINQNNQNNNNNNIINNNNNNNNQNNTTTNNKNK), 583–607 (DNNTVFNNNTTTTNNNNNNNNNNSS), 691–712 (NKSPLISPSLSKSNTTTTTTTT), 744–779 (NMNNNNNNNNNNNNNNNNNNNNNNNNNNNNNNNSNN), and 896–944 (QSNN…SSSN). Gly residues predominate over residues 1311–1320 (NGNGNGGING). Over residues 1321-1333 (NNGNNSGSNNKEN) the composition is skewed to low complexity. A compositionally biased stretch (gly residues) spans 1334 to 1346 (GGTGAGIGGGGGL). The segment covering 1347–1359 (QLPNNNNNNNTTP) has biased composition (low complexity).

This is an uncharacterized protein from Dictyostelium discoideum (Social amoeba).